Consider the following 169-residue polypeptide: uncharacterized protein (169 aa).

Helical transmembrane passes span Asn-10–Ile-30 and Ile-149–Pro-169.

It localises to the membrane. This is an uncharacterized protein from Dictyostelium discoideum (Social amoeba).